The following is a 282-amino-acid chain: Pantothenate synthetase (282 aa).

Position 30–37 (30–37 (MGGLHQGH)) interacts with ATP. Residue His-37 is the Proton donor of the active site. Gln-61 serves as a coordination point for (R)-pantoate. Gln-61 contacts beta-alanine. 146–149 (GQKD) lines the ATP pocket. Gln-152 contributes to the (R)-pantoate binding site. Residues Ile-175 and 183–186 (MSTR) each bind ATP.

It belongs to the pantothenate synthetase family. In terms of assembly, homodimer.

Its subcellular location is the cytoplasm. The enzyme catalyses (R)-pantoate + beta-alanine + ATP = (R)-pantothenate + AMP + diphosphate + H(+). It functions in the pathway cofactor biosynthesis; (R)-pantothenate biosynthesis; (R)-pantothenate from (R)-pantoate and beta-alanine: step 1/1. Functionally, catalyzes the condensation of pantoate with beta-alanine in an ATP-dependent reaction via a pantoyl-adenylate intermediate. This chain is Pantothenate synthetase, found in Vesicomyosocius okutanii subsp. Calyptogena okutanii (strain HA).